Here is a 476-residue protein sequence, read N- to C-terminus: Nyctalopin (476 aa).

The N-terminal stretch at 1 to 18 (MLILLLHAVVFSLPYTRA) is a signal peptide. One can recognise an LRRNT domain in the interval 19-57 (TEACLRACPAACTCSHVERGCSVRCDRAGLQRVPQEFPC). 11 LRR repeats span residues 58–79 (EAAS…AFGT), 82–103 (SLRR…AFKG), 106–128 (RLAE…TFAA), 131–154 (RLRR…AELP), 155–177 (ALRE…RGLA), 178–199 (NLTH…SLLG), 202–223 (RLRS…AFGD), 226–247 (ALED…AFRG), 250–271 (RLRT…WFSD), 274–295 (ELEL…AFQN), and 298–319 (GLLA…AFQP). N92 carries N-linked (GlcNAc...) asparagine glycosylation. N178 is a glycosylation site (N-linked (GlcNAc...) asparagine). N-linked (GlcNAc...) asparagine glycosylation occurs at N295. Residues 331-383 (NPWRCDCQLEWLRDWMEGSGRVADVACASPGSVAGQDLSQVVFERSSDGLCVD) form the LRRCT domain. Residues N388, N427, N434, and N438 are each glycosylated (N-linked (GlcNAc...) asparagine).

This sequence belongs to the small leucine-rich proteoglycan (SLRP) family. SLRP class IV subfamily. Expressed abundantly in retina with lower levels in brain, lung, spleen and testis. Not detected in kidney, heart or liver. In the retina, highest expression found in the inner nuclear layer and ganglion cell layer.

The protein localises to the secreted. It localises to the extracellular space. Its subcellular location is the extracellular matrix. This chain is Nyctalopin (Nyx), found in Mus musculus (Mouse).